The chain runs to 81 residues: Conotoxin ViKr92 (81 aa).

An N-terminal signal peptide occupies residues methionine 1–alanine 22. A propeptide spanning residues aspartate 23–arginine 51 is cleaved from the precursor. Disulfide bonds link cysteine 53/cysteine 70, cysteine 60/cysteine 74, and cysteine 69/cysteine 78.

This sequence belongs to the conotoxin O1 superfamily. In terms of tissue distribution, expressed by the venom duct.

The protein localises to the secreted. This Conus virgo (Virgin cone) protein is Conotoxin ViKr92.